The chain runs to 429 residues: MDMQTGSRFFTDRLADSDPDLFQAIRSELTRQQDQIELIASENIVSQAVLEAQGSVLTNKYAEGYAGRRYYGGCEYVDIAETLAIERAKALFGCAYANVQPHSGAQANQAVFMALLQPGDTFMGMDLAAGGHLTHGAPANQSGKWFKVVSYGVRRDDHLIDYEEVEAKAREHRPKLIIAGGSAYPRQIDFARFRRIADEIGAYLMVDMAHYAGLVAAGVYPSPLPHAHVVTTTTHKTLRGPRGGMILSNDPELGKKFNSAVFPGLQGGPLMHVIAAKAVAFGEALRPEFKAYAQAVVDNARVLADRLVAGGLDIVSGGTDSHIVLVDLRPKRLTGKAAEATLEHAGMTCNKNGVPFDPEKPLVTSGVRLGSPAATTRGFGTAEFAQVGDLIVEVLDGLARSNGDNTATETRVREQVRALCHRFPIYPAL.

(6S)-5,6,7,8-tetrahydrofolate is bound by residues Leu-127 and Gly-131–Leu-133. Lys-236 bears the N6-(pyridoxal phosphate)lysine mark. Glu-252 lines the (6S)-5,6,7,8-tetrahydrofolate pocket.

This sequence belongs to the SHMT family. In terms of assembly, homodimer. Pyridoxal 5'-phosphate is required as a cofactor.

The protein localises to the cytoplasm. The catalysed reaction is (6R)-5,10-methylene-5,6,7,8-tetrahydrofolate + glycine + H2O = (6S)-5,6,7,8-tetrahydrofolate + L-serine. The protein operates within one-carbon metabolism; tetrahydrofolate interconversion. Its pathway is amino-acid biosynthesis; glycine biosynthesis; glycine from L-serine: step 1/1. In terms of biological role, catalyzes the reversible interconversion of serine and glycine with tetrahydrofolate (THF) serving as the one-carbon carrier. This reaction serves as the major source of one-carbon groups required for the biosynthesis of purines, thymidylate, methionine, and other important biomolecules. Also exhibits THF-independent aldolase activity toward beta-hydroxyamino acids, producing glycine and aldehydes, via a retro-aldol mechanism. The sequence is that of Serine hydroxymethyltransferase from Rhodospirillum centenum (strain ATCC 51521 / SW).